A 562-amino-acid polypeptide reads, in one-letter code: Glutamine--tRNA ligase (562 aa).

A 'HIGH' region motif is present at residues 35 to 45 (PEPNGYLHIGH). Residues 36–38 (EPN) and 42–48 (HIGHAKS) contribute to the ATP site. Residues aspartate 68 and tyrosine 213 each contribute to the L-glutamine site. Residues threonine 232, 262–263 (RL), and 270–272 (LSK) contribute to the ATP site. The 'KMSKS' region motif lies at 269-273 (ILSKR).

The protein belongs to the class-I aminoacyl-tRNA synthetase family. In terms of assembly, monomer.

It is found in the cytoplasm. The enzyme catalyses tRNA(Gln) + L-glutamine + ATP = L-glutaminyl-tRNA(Gln) + AMP + diphosphate. The polypeptide is Glutamine--tRNA ligase (Buchnera aphidicola subsp. Schizaphis graminum (strain Sg)).